The sequence spans 260 residues: 14-3-3-like protein (260 aa).

Belongs to the 14-3-3 family.

This Pisum sativum (Garden pea) protein is 14-3-3-like protein.